A 545-amino-acid chain; its full sequence is Ribosomal protein uS12 methylthiotransferase RimO (545 aa).

In terms of domain architecture, MTTase N-terminal spans 7 to 129 (RRVALVTLGC…IGEHLDAVLG (123 aa)). [4Fe-4S] cluster is bound by residues Cys-16, Cys-52, Cys-92, Cys-197, Cys-201, and Cys-204. Residues 183–414 (LTAGPVAALK…DLVEQLTATR (232 aa)) enclose the Radical SAM core domain. The region spanning 416–510 (QERIGSRVQV…GVDLVAEFTA (95 aa)) is the TRAM domain. Disordered regions lie at residues 454–486 (LPGP…QPGV) and 516–545 (RPSA…ADGT). Residues 455-464 (PGPAGAAAGP) show a composition bias toward low complexity.

This sequence belongs to the methylthiotransferase family. RimO subfamily. The cofactor is [4Fe-4S] cluster.

It is found in the cytoplasm. The enzyme catalyses L-aspartate(89)-[ribosomal protein uS12]-hydrogen + (sulfur carrier)-SH + AH2 + 2 S-adenosyl-L-methionine = 3-methylsulfanyl-L-aspartate(89)-[ribosomal protein uS12]-hydrogen + (sulfur carrier)-H + 5'-deoxyadenosine + L-methionine + A + S-adenosyl-L-homocysteine + 2 H(+). Functionally, catalyzes the methylthiolation of an aspartic acid residue of ribosomal protein uS12. The polypeptide is Ribosomal protein uS12 methylthiotransferase RimO (Frankia alni (strain DSM 45986 / CECT 9034 / ACN14a)).